The following is a 166-amino-acid chain: UPF0304 protein VC_1871 (166 aa).

The protein belongs to the UPF0304 family.

The sequence is that of UPF0304 protein VC_1871 from Vibrio cholerae serotype O1 (strain ATCC 39315 / El Tor Inaba N16961).